A 351-amino-acid chain; its full sequence is L-threonine 3-dehydrogenase (351 aa).

Residue cysteine 39 coordinates Zn(2+). Active-site charge relay system residues include threonine 41 and histidine 44. Zn(2+)-binding residues include histidine 64, glutamate 65, cysteine 94, cysteine 97, cysteine 100, and cysteine 108. Residues isoleucine 176, aspartate 196, arginine 201, 271 to 273 (LGI), and 295 to 296 (IY) contribute to the NAD(+) site.

The protein belongs to the zinc-containing alcohol dehydrogenase family. In terms of assembly, homotetramer. The cofactor is Zn(2+).

The protein resides in the cytoplasm. It catalyses the reaction L-threonine + NAD(+) = (2S)-2-amino-3-oxobutanoate + NADH + H(+). The protein operates within amino-acid degradation; L-threonine degradation via oxydo-reductase pathway; glycine from L-threonine: step 1/2. Its function is as follows. Catalyzes the NAD(+)-dependent oxidation of L-threonine to 2-amino-3-ketobutyrate. This is L-threonine 3-dehydrogenase from Francisella tularensis subsp. mediasiatica (strain FSC147).